Consider the following 216-residue polypeptide: ATP-dependent dethiobiotin synthetase BioD (216 aa).

An ATP-binding site is contributed by 12–17; it reads NVGKTF. Thr-16 contacts Mg(2+). The active site involves Lys-36. Ser-40 provides a ligand contact to substrate. Residues Asp-53, 110–113, and 170–171 contribute to the ATP site; these read EGAG and NQ. Mg(2+) is bound by residues Asp-53 and Glu-110.

Belongs to the dethiobiotin synthetase family. As to quaternary structure, homodimer. Mg(2+) is required as a cofactor.

It is found in the cytoplasm. It catalyses the reaction (7R,8S)-7,8-diammoniononanoate + CO2 + ATP = (4R,5S)-dethiobiotin + ADP + phosphate + 3 H(+). Its pathway is cofactor biosynthesis; biotin biosynthesis; biotin from 7,8-diaminononanoate: step 1/2. In terms of biological role, catalyzes a mechanistically unusual reaction, the ATP-dependent insertion of CO2 between the N7 and N8 nitrogen atoms of 7,8-diaminopelargonic acid (DAPA, also called 7,8-diammoniononanoate) to form a ureido ring. This Vesicomyosocius okutanii subsp. Calyptogena okutanii (strain HA) protein is ATP-dependent dethiobiotin synthetase BioD.